The chain runs to 506 residues: Maturase K (506 aa).

This sequence belongs to the intron maturase 2 family. MatK subfamily.

The protein resides in the plastid. It is found in the chloroplast. In terms of biological role, usually encoded in the trnK tRNA gene intron. Probably assists in splicing its own and other chloroplast group II introns. The polypeptide is Maturase K (Manihot esculenta (Cassava)).